The primary structure comprises 69 residues: Putative antitoxin AF_1481 (69 aa).

The protein belongs to the UPF0330 family.

Its function is as follows. Possibly the antitoxin component of a type II toxin-antitoxin (TA) system. The protein is Putative antitoxin AF_1481 of Archaeoglobus fulgidus (strain ATCC 49558 / DSM 4304 / JCM 9628 / NBRC 100126 / VC-16).